Reading from the N-terminus, the 92-residue chain is UPF0250 protein Smlt4048 (92 aa).

It belongs to the UPF0250 family.

In Stenotrophomonas maltophilia (strain K279a), this protein is UPF0250 protein Smlt4048.